The primary structure comprises 425 residues: Serine--tRNA ligase (425 aa).

An L-serine-binding site is contributed by 231–233 (TAE). 262 to 264 (RSE) is an ATP binding site. Position 285 (Glu-285) interacts with L-serine. An ATP-binding site is contributed by 349-352 (EISS). L-serine is bound at residue Ser-385.

It belongs to the class-II aminoacyl-tRNA synthetase family. Type-1 seryl-tRNA synthetase subfamily. In terms of assembly, homodimer. The tRNA molecule binds across the dimer.

The protein resides in the cytoplasm. The catalysed reaction is tRNA(Ser) + L-serine + ATP = L-seryl-tRNA(Ser) + AMP + diphosphate + H(+). It catalyses the reaction tRNA(Sec) + L-serine + ATP = L-seryl-tRNA(Sec) + AMP + diphosphate + H(+). It functions in the pathway aminoacyl-tRNA biosynthesis; selenocysteinyl-tRNA(Sec) biosynthesis; L-seryl-tRNA(Sec) from L-serine and tRNA(Sec): step 1/1. Functionally, catalyzes the attachment of serine to tRNA(Ser). Is also able to aminoacylate tRNA(Sec) with serine, to form the misacylated tRNA L-seryl-tRNA(Sec), which will be further converted into selenocysteinyl-tRNA(Sec). The protein is Serine--tRNA ligase of Desulfosudis oleivorans (strain DSM 6200 / JCM 39069 / Hxd3) (Desulfococcus oleovorans).